The following is a 1017-amino-acid chain: Dopamine dehydroxylase (1017 aa).

Residues 1-34 constitute a signal peptide (tat-type signal); it reads MGNLTMSRRTFVKTAAITGAAAAAFGASTHTALA. One can recognise a 4Fe-4S Mo/W bis-MGD-type domain in the interval 45 to 103; the sequence is DTVAVKTCCRGCGKMECGVKVIVQNGRAIRVEGDEGAFQSMGNCCTKSQSSIQAAYHPD. [4Fe-4S] cluster contacts are provided by Cys-53, Cys-56, Cys-61, and Cys-89. Lys-91 serves as the catalytic Electron donor/acceptor.

This sequence belongs to the prokaryotic molybdopterin-containing oxidoreductase family. Requires [4Fe-4S] cluster as cofactor. Mo-bis(molybdopterin guanine dinucleotide) is required as a cofactor. Post-translationally, predicted to be exported by the Tat system. The position of the signal peptide cleavage has not been experimentally proven.

It catalyses the reaction dopamine + AH2 = 3-tyramine + A + H2O. Involved in drug metabolism, as part of an interspecies gut bacterial pathway for Levodopa (L-dopa) metabolism, acting on dopamine produced by Enterecoccus L-dopa decarboxylase. Removes the para hydroxyl group of dopamine to produce m-tyramine (3-tyramine). It is possible that dopamine dehydroxylation influences the multiple side effects of L-dopa administration linked to dopamine production in the treatment of Parkinson's disease. This Eggerthella lenta (Eubacterium lentum) protein is Dopamine dehydroxylase.